We begin with the raw amino-acid sequence, 166 residues long: Small ribosomal subunit protein uS5 (166 aa).

In terms of domain architecture, S5 DRBM spans 11–74 (LEDRVVAINR…DAARKNLIEV (64 aa)).

The protein belongs to the universal ribosomal protein uS5 family. In terms of assembly, part of the 30S ribosomal subunit. Contacts proteins S4 and S8.

Its function is as follows. With S4 and S12 plays an important role in translational accuracy. Located at the back of the 30S subunit body where it stabilizes the conformation of the head with respect to the body. The sequence is that of Small ribosomal subunit protein uS5 from Ligilactobacillus salivarius (strain UCC118) (Lactobacillus salivarius).